The chain runs to 154 residues: PHA granule-associated protein PhaP (154 aa).

The protein resides in the cytoplasmic granule. Its function is as follows. Polyhydroxyalkanoate (PHA) granule structural protein. Important for PHA granule formation and separation, and for cell growth. This chain is PHA granule-associated protein PhaP (phaP), found in Haloferax mediterranei (strain ATCC 33500 / DSM 1411 / JCM 8866 / NBRC 14739 / NCIMB 2177 / R-4) (Halobacterium mediterranei).